A 447-amino-acid chain; its full sequence is ATP-dependent protease ATPase subunit HslU (447 aa).

ATP-binding positions include I18, 60 to 65 (GVGKTE), D259, E325, and R397.

Belongs to the ClpX chaperone family. HslU subfamily. In terms of assembly, a double ring-shaped homohexamer of HslV is capped on each side by a ring-shaped HslU homohexamer. The assembly of the HslU/HslV complex is dependent on binding of ATP.

The protein localises to the cytoplasm. ATPase subunit of a proteasome-like degradation complex; this subunit has chaperone activity. The binding of ATP and its subsequent hydrolysis by HslU are essential for unfolding of protein substrates subsequently hydrolyzed by HslV. HslU recognizes the N-terminal part of its protein substrates and unfolds these before they are guided to HslV for hydrolysis. The chain is ATP-dependent protease ATPase subunit HslU from Burkholderia lata (strain ATCC 17760 / DSM 23089 / LMG 22485 / NCIMB 9086 / R18194 / 383).